The following is a 376-amino-acid chain: tRNA-specific 2-thiouridylase MnmA (376 aa).

ATP-binding positions include 14 to 21 (GMSGGVDS) and methionine 40. Residues 100-102 (NPD) form an interaction with target base in tRNA region. Catalysis depends on cysteine 105, which acts as the Nucleophile. Residues cysteine 105 and cysteine 202 are joined by a disulfide bond. Glycine 129 contributes to the ATP binding site. Positions 152-154 (KDQ) are interaction with tRNA. The active-site Cysteine persulfide intermediate is cysteine 202. The interaction with tRNA stretch occupies residues 315 to 316 (RY).

This sequence belongs to the MnmA/TRMU family.

The protein resides in the cytoplasm. It carries out the reaction S-sulfanyl-L-cysteinyl-[protein] + uridine(34) in tRNA + AH2 + ATP = 2-thiouridine(34) in tRNA + L-cysteinyl-[protein] + A + AMP + diphosphate + H(+). Functionally, catalyzes the 2-thiolation of uridine at the wobble position (U34) of tRNA, leading to the formation of s(2)U34. In Lactococcus lactis subsp. lactis (strain IL1403) (Streptococcus lactis), this protein is tRNA-specific 2-thiouridylase MnmA.